Here is a 130-residue protein sequence, read N- to C-terminus: Holo-[acyl-carrier-protein] synthase (130 aa).

2 residues coordinate Mg(2+): aspartate 8 and glutamate 62.

The protein belongs to the P-Pant transferase superfamily. AcpS family. The cofactor is Mg(2+).

Its subcellular location is the cytoplasm. The enzyme catalyses apo-[ACP] + CoA = holo-[ACP] + adenosine 3',5'-bisphosphate + H(+). Functionally, transfers the 4'-phosphopantetheine moiety from coenzyme A to a Ser of acyl-carrier-protein. The protein is Holo-[acyl-carrier-protein] synthase of Herminiimonas arsenicoxydans.